We begin with the raw amino-acid sequence, 447 residues long: Argininosuccinate synthase (447 aa).

Residues alanine 17–serine 25 and alanine 43 contribute to the ATP site. An L-citrulline-binding site is contributed by tyrosine 99. 2 residues coordinate ATP: glycine 129 and threonine 131. 3 residues coordinate L-aspartate: threonine 131, asparagine 135, and aspartate 136. Asparagine 135 contributes to the L-citrulline binding site. Aspartate 136 is a binding site for ATP. Positions 139 and 192 each coordinate L-citrulline. Aspartate 194 provides a ligand contact to ATP. L-citrulline contacts are provided by threonine 201, glutamate 203, and glutamate 280.

Belongs to the argininosuccinate synthase family. Type 2 subfamily. As to quaternary structure, homotetramer.

It localises to the cytoplasm. It catalyses the reaction L-citrulline + L-aspartate + ATP = 2-(N(omega)-L-arginino)succinate + AMP + diphosphate + H(+). It functions in the pathway amino-acid biosynthesis; L-arginine biosynthesis; L-arginine from L-ornithine and carbamoyl phosphate: step 2/3. The sequence is that of Argininosuccinate synthase from Escherichia fergusonii (strain ATCC 35469 / DSM 13698 / CCUG 18766 / IAM 14443 / JCM 21226 / LMG 7866 / NBRC 102419 / NCTC 12128 / CDC 0568-73).